The following is a 921-amino-acid chain: Isoleucine--tRNA ligase (921 aa).

Residues 57–67 carry the 'HIGH' region motif; sequence PYANGDIHMGH. Glu-552 contacts L-isoleucyl-5'-AMP. The 'KMSKS' region motif lies at 593-597; that stretch reads KMSKS. Position 596 (Lys-596) interacts with ATP. The Zn(2+) site is built by Cys-888, Cys-891, Cys-908, and Cys-911.

The protein belongs to the class-I aminoacyl-tRNA synthetase family. IleS type 1 subfamily. Monomer. It depends on Zn(2+) as a cofactor.

The protein localises to the cytoplasm. The catalysed reaction is tRNA(Ile) + L-isoleucine + ATP = L-isoleucyl-tRNA(Ile) + AMP + diphosphate. Catalyzes the attachment of isoleucine to tRNA(Ile). As IleRS can inadvertently accommodate and process structurally similar amino acids such as valine, to avoid such errors it has two additional distinct tRNA(Ile)-dependent editing activities. One activity is designated as 'pretransfer' editing and involves the hydrolysis of activated Val-AMP. The other activity is designated 'posttransfer' editing and involves deacylation of mischarged Val-tRNA(Ile). This chain is Isoleucine--tRNA ligase, found in Bacillus anthracis (strain A0248).